The chain runs to 288 residues: MSDPIDVAAETPGDGLPPLREVIATHGLDARRSLGQNFLFDLNLTGRIARAGGEIDQGTVIEIGPGPGGLTRALLGAGARRVIAIERDSRCRGVLAEIAAVWPGRLETIEGDALDIDVAALGEAPRRVIANLPYNVATPLLIGWLRHASAFERFVLMFQKEVVDRLAARPGTKDYGRLSVITQWLCEVRPLFDVNPRAFTPPPKVVSTVVRIDPRPQPLAPARMETLERVTAAAFGQRRKMLRASLKALGDAEGLCAAAGLDPTARAETIPVEGFAALARAVDAAGSV.

S-adenosyl-L-methionine-binding residues include Asn37, Leu39, Gly64, Glu86, Asp112, and Asn131.

This sequence belongs to the class I-like SAM-binding methyltransferase superfamily. rRNA adenine N(6)-methyltransferase family. RsmA subfamily.

It localises to the cytoplasm. The catalysed reaction is adenosine(1518)/adenosine(1519) in 16S rRNA + 4 S-adenosyl-L-methionine = N(6)-dimethyladenosine(1518)/N(6)-dimethyladenosine(1519) in 16S rRNA + 4 S-adenosyl-L-homocysteine + 4 H(+). Functionally, specifically dimethylates two adjacent adenosines (A1518 and A1519) in the loop of a conserved hairpin near the 3'-end of 16S rRNA in the 30S particle. May play a critical role in biogenesis of 30S subunits. The protein is Ribosomal RNA small subunit methyltransferase A of Rhodospirillum rubrum (strain ATCC 11170 / ATH 1.1.1 / DSM 467 / LMG 4362 / NCIMB 8255 / S1).